We begin with the raw amino-acid sequence, 319 residues long: Structure-specific endonuclease subunit SLX1 (319 aa).

A GIY-YIG domain is found at 20–103 (TFYCCYLLQS…QHGYKTHYIP (84 aa)). The segment at 233–297 (CNLCGQCYDY…LPNFCMCPGC (65 aa)) adopts an SLX1-type zinc-finger fold.

Belongs to the SLX1 family. As to quaternary structure, forms a heterodimer with SLX4. It depends on a divalent metal cation as a cofactor.

The protein resides in the nucleus. In terms of biological role, catalytic subunit of the SLX1-SLX4 structure-specific endonuclease that resolves DNA secondary structures generated during DNA repair and recombination. Has endonuclease activity towards branched DNA substrates, introducing single-strand cuts in duplex DNA close to junctions with ss-DNA. This Vanderwaltozyma polyspora (strain ATCC 22028 / DSM 70294 / BCRC 21397 / CBS 2163 / NBRC 10782 / NRRL Y-8283 / UCD 57-17) (Kluyveromyces polysporus) protein is Structure-specific endonuclease subunit SLX1.